Here is a 107-residue protein sequence, read N- to C-terminus: uncharacterized protein (107 aa).

Residues 52–72 (LIIHDLFIYIFILNFFFFPFC) form a helical membrane-spanning segment.

Its subcellular location is the membrane. This is an uncharacterized protein from Saccharomyces cerevisiae (strain ATCC 204508 / S288c) (Baker's yeast).